A 376-amino-acid polypeptide reads, in one-letter code: N-acetyldiaminopimelate deacetylase (376 aa).

Asp-69 is an active-site residue. The active-site Proton acceptor is Glu-128.

It belongs to the peptidase M20A family. N-acetyldiaminopimelate deacetylase subfamily.

The catalysed reaction is N-acetyl-(2S,6S)-2,6-diaminopimelate + H2O = (2S,6S)-2,6-diaminopimelate + acetate. It functions in the pathway amino-acid biosynthesis; L-lysine biosynthesis via DAP pathway; LL-2,6-diaminopimelate from (S)-tetrahydrodipicolinate (acetylase route): step 3/3. Catalyzes the conversion of N-acetyl-diaminopimelate to diaminopimelate and acetate. This is N-acetyldiaminopimelate deacetylase from Streptococcus uberis (strain ATCC BAA-854 / 0140J).